The sequence spans 225 residues: Large ribosomal subunit protein uL4 (225 aa).

A disordered region spans residues 46–102 (KRQGTHATKGRGEVRGGGRKPFRQKGTGRARQGSIRAPHFTGGGTVHGPQPRDYSQR). A compositionally biased stretch (basic residues) spans 62 to 73 (GGRKPFRQKGTG).

Belongs to the universal ribosomal protein uL4 family. Part of the 50S ribosomal subunit.

One of the primary rRNA binding proteins, this protein initially binds near the 5'-end of the 23S rRNA. It is important during the early stages of 50S assembly. It makes multiple contacts with different domains of the 23S rRNA in the assembled 50S subunit and ribosome. Its function is as follows. Forms part of the polypeptide exit tunnel. The protein is Large ribosomal subunit protein uL4 of Corynebacterium urealyticum (strain ATCC 43042 / DSM 7109).